The primary structure comprises 217 residues: Large ribosomal subunit protein bL25 (217 aa).

The disordered stretch occupies residues 187 to 217; the sequence is STPSGLEVEEETGEEESAEPEVIEKGKKEEE. Over residues 193-207 the composition is skewed to acidic residues; it reads EVEEETGEEESAEPE. Over residues 208-217 the composition is skewed to basic and acidic residues; the sequence is VIEKGKKEEE.

It belongs to the bacterial ribosomal protein bL25 family. CTC subfamily. Part of the 50S ribosomal subunit; part of the 5S rRNA/L5/L18/L25 subcomplex. Contacts the 5S rRNA. Binds to the 5S rRNA independently of L5 and L18.

This is one of the proteins that binds to the 5S RNA in the ribosome where it forms part of the central protuberance. This chain is Large ribosomal subunit protein bL25, found in Thermosipho africanus (strain TCF52B).